The following is a 352-amino-acid chain: Holliday junction branch migration complex subunit RuvB (352 aa).

Positions 4-185 are large ATPase domain (RuvB-L); it reads ADRLIAATGP…FGIVQRLEFY (182 aa). Residues I24, R25, G66, K69, T70, T71, 132 to 134, R175, Y185, and R222 contribute to the ATP site; that span reads EDF. A Mg(2+)-binding site is contributed by T70. A small ATPAse domain (RuvB-S) region spans residues 186 to 256; it reads STADLATIVS…VADLALNLLD (71 aa). The head domain (RuvB-H) stretch occupies residues 259–352; sequence EHGFDHQDRR…VDEFLDAVDD (94 aa). Positions 295, 314, and 319 each coordinate DNA.

This sequence belongs to the RuvB family. In terms of assembly, homohexamer. Forms an RuvA(8)-RuvB(12)-Holliday junction (HJ) complex. HJ DNA is sandwiched between 2 RuvA tetramers; dsDNA enters through RuvA and exits via RuvB. An RuvB hexamer assembles on each DNA strand where it exits the tetramer. Each RuvB hexamer is contacted by two RuvA subunits (via domain III) on 2 adjacent RuvB subunits; this complex drives branch migration. In the full resolvosome a probable DNA-RuvA(4)-RuvB(12)-RuvC(2) complex forms which resolves the HJ.

It localises to the cytoplasm. It catalyses the reaction ATP + H2O = ADP + phosphate + H(+). The RuvA-RuvB-RuvC complex processes Holliday junction (HJ) DNA during genetic recombination and DNA repair, while the RuvA-RuvB complex plays an important role in the rescue of blocked DNA replication forks via replication fork reversal (RFR). RuvA specifically binds to HJ cruciform DNA, conferring on it an open structure. The RuvB hexamer acts as an ATP-dependent pump, pulling dsDNA into and through the RuvAB complex. RuvB forms 2 homohexamers on either side of HJ DNA bound by 1 or 2 RuvA tetramers; 4 subunits per hexamer contact DNA at a time. Coordinated motions by a converter formed by DNA-disengaged RuvB subunits stimulates ATP hydrolysis and nucleotide exchange. Immobilization of the converter enables RuvB to convert the ATP-contained energy into a lever motion, pulling 2 nucleotides of DNA out of the RuvA tetramer per ATP hydrolyzed, thus driving DNA branch migration. The RuvB motors rotate together with the DNA substrate, which together with the progressing nucleotide cycle form the mechanistic basis for DNA recombination by continuous HJ branch migration. Branch migration allows RuvC to scan DNA until it finds its consensus sequence, where it cleaves and resolves cruciform DNA. This chain is Holliday junction branch migration complex subunit RuvB, found in Pseudomonas fluorescens (strain SBW25).